The primary structure comprises 1405 residues: Protein crumbs homolog 1 (1405 aa).

The N-terminal stretch at 1-27 (MKLKRTAYLLFLYLSSSLLICIKNSFC) is a signal peptide. The Extracellular portion of the chain corresponds to 28-1339 (NKNNTRCLSG…RCELDLADDR (1312 aa)). The 38-residue stretch at 30 to 67 (NNTRCLSGPCQNNSTCKHFPQDNNCCLDTANNLDKDCE) folds into the EGF-like 1; atypical domain. Intrachain disulfides connect Cys34-Cys45, Cys39-Cys54, Cys55-Cys66, Cys73-Cys84, Cys78-Cys95, Cys97-Cys106, Cys113-Cys124, Cys118-Cys133, Cys135-Cys144, Cys151-Cys162, Cys156-Cys171, Cys173-Cys182, Cys189-Cys200, Cys194-Cys209, Cys211-Cys220, Cys227-Cys238, Cys232-Cys247, Cys249-Cys258, Cys265-Cys276, Cys270-Cys285, Cys287-Cys297, Cys304-Cys315, Cys309-Cys324, Cys326-Cys335, Cys342-Cys353, Cys347-Cys382, Cys384-Cys393, Cys400-Cys411, Cys405-Cys420, Cys422-Cys437, Cys444-Cys455, Cys449-Cys468, and Cys470-Cys479. N-linked (GlcNAc...) asparagine glycosylation is present at Asn41. EGF-like domains lie at 69 to 107 (LKDP…LNCE) and 109 to 145 (ATNS…RFCE). An EGF-like 4; calcium-binding domain is found at 147 to 183 (DHNECASSPCHNGAMCQDGINGYSCFCVPGYQGRHCD). The EGF-like 5; calcium-binding domain occupies 185-221 (EVDECVSDPCKNEAVCLNEIGRYTCVCPQEFSGVNCE). Positions 223 to 259 (EIDECRSQPCLHGATCQDAPGGYSCDCAPGFLGEHCE) constitute an EGF-like 6; calcium-binding domain. EGF-like domains lie at 261–298 (SVNE…MHCE), 300–336 (LIPL…ALCE), 338–394 (DINE…IHCE), 396–438 (DVDE…ENCS), and 440–480 (ILLG…PLCE). The Laminin G-like 1 domain occupies 482-669 (VTTLSFGSNG…GLSSNVKAGC (188 aa)). Asn560 and Asn656 each carry an N-linked (GlcNAc...) asparagine glycan. 4 disulfides stabilise this stretch: Cys641–Cys669, Cys675–Cys686, Cys680–Cys695, and Cys697–Cys706. The EGF-like 12 domain occupies 671–707 (GKDWCESQPCQNRGRCINLWQGYQCECDRPYTGSNCL). The 172-residue stretch at 713–884 (GRFGQDDSTG…PILVNVTQGC (172 aa)) folds into the Laminin G-like 2 domain. Residues Asn756 and Asn879 are each glycosylated (N-linked (GlcNAc...) asparagine). Cystine bridges form between Cys850–Cys884, Cys890–Cys901, Cys895–Cys910, Cys912–Cys921, Cys927–Cys938, and Cys932–Cys947. EGF-like domains lie at 886–922 (GDNT…RACE) and 923–959 (QVQW…LSRE). Positions 950-1136 (NAVFSGLSRE…VSTNMVLTGC (187 aa)) constitute a Laminin G-like 3 domain. 3 N-linked (GlcNAc...) asparagine glycosylation sites follow: Asn967, Asn974, and Asn999. 16 disulfides stabilise this stretch: Cys1095–Cys1136, Cys1142–Cys1153, Cys1147–Cys1162, Cys1164–Cys1173, Cys1180–Cys1190, Cys1185–Cys1199, Cys1201–Cys1210, Cys1217–Cys1228, Cys1222–Cys1237, Cys1239–Cys1248, Cys1258–Cys1273, Cys1267–Cys1282, Cys1284–Cys1293, Cys1300–Cys1311, Cys1305–Cys1320, and Cys1322–Cys1331. An EGF-like 15 domain is found at 1138 to 1174 (PSNACHSSPCLHGGNCEDSYSSYRCACLSGWSGTHCE). In terms of domain architecture, EGF-like 16; calcium-binding spans 1176-1211 (NIDECFSSPCIHGNCSDGVAAYHCRCEPGYTGVNCE). An N-linked (GlcNAc...) asparagine glycan is attached at Asn1189. EGF-like domains follow at residues 1213-1249 (DVDN…RFCR) and 1254-1294 (PSTV…EWCE). N-linked (GlcNAc...) asparagine glycans are attached at residues Asn1242 and Asn1264. The EGF-like 19; calcium-binding domain occupies 1296–1332 (DINECASDPCINGGLCRDLVNRFLCICDVAFAGERCE). The chain crosses the membrane as a helical span at residues 1340 to 1360 (LLGIFTAVGSGTLALFFILLL). The Cytoplasmic portion of the chain corresponds to 1361–1405 (AGVASLIASNKRATQGTYSPSGQEKAGPRVEMWIRMPPPALERLI).

It belongs to the Crumbs protein family. Component of a complex composed of PALS1, CRB1 and EPB41L5. Within the complex, interacts (via intracellular domain) with PALS1 and EPB41L5 (via FERM domain). Forms a complex with MPP4 and PALS1. Interacts with MPDZ/MUPP1 and MPP4. In terms of processing, glycosylated. Expressed in the kidney, lung, stomach and testis. Expressed in the brain. Expressed in the retina of the eye. Expressed in the outer nuclear layer, photoreceptor layer and inner nuclear layer of the retina. Expressed in Mueller cell radial processes in the inner nuclear layer, in apical processes sclerad to the external limiting membrane, and in the subapical region, adjacent to the adherens junction of retinal photoreceptors. In the brain, expressed in the granular layer of the cerebellum, the hippocampal dentate gyrus, the olfactory bulbs, the subventricular region lining the telencephalic ventricles and the rostral migratory stream. As to expression, ubiquitously expressed.

It localises to the apical cell membrane. It is found in the secreted. The protein resides in the cell projection. The protein localises to the cilium. Its subcellular location is the photoreceptor outer segment. It localises to the photoreceptor inner segment. It is found in the cytoplasm. The protein resides in the cell junction. The protein localises to the focal adhesion. Plays a role in photoreceptor morphogenesis in the retina. May maintain cell polarization and adhesion. In terms of biological role, may play a role in epidermal tissue morphogenesis. May function in cell attachment for stratified epithelial organization. The sequence is that of Protein crumbs homolog 1 (Crb1) from Mus musculus (Mouse).